The chain runs to 339 residues: uncharacterized protein (339 aa).

28–35 provides a ligand contact to ATP; the sequence is GPINSGKT.

This sequence belongs to the archaeal ATPase family.

This is an uncharacterized protein from Pyrococcus abyssi (strain GE5 / Orsay).